Consider the following 297-residue polypeptide: 33 kDa chaperonin (297 aa).

Intrachain disulfides connect C234-C236 and C267-C270.

Belongs to the HSP33 family. In terms of processing, under oxidizing conditions two disulfide bonds are formed involving the reactive cysteines. Under reducing conditions zinc is bound to the reactive cysteines and the protein is inactive.

It localises to the cytoplasm. Redox regulated molecular chaperone. Protects both thermally unfolding and oxidatively damaged proteins from irreversible aggregation. Plays an important role in the bacterial defense system toward oxidative stress. This chain is 33 kDa chaperonin, found in Pseudoalteromonas atlantica (strain T6c / ATCC BAA-1087).